Reading from the N-terminus, the 216-residue chain is Cell envelope integrity protein Cei (216 aa).

Residues 25-45 (PAIVVVAFLVVVTCVMWTLAL) form a helical membrane-spanning segment.

The protein resides in the cell membrane. Contributes to cell envelope integrity and virulence. The chain is Cell envelope integrity protein Cei from Mycobacterium tuberculosis (strain ATCC 25618 / H37Rv).